The sequence spans 388 residues: GTPase Obg (388 aa).

One can recognise an Obg domain in the interval 1–159; the sequence is MKFVDEATIR…RSLRLELMLL (159 aa). One can recognise an OBG-type G domain in the interval 160–333; sequence ADVGLLGMPN…LALKLLDFID (174 aa). GTP contacts are provided by residues 166–173, 191–195, 213–216, 283–286, and 314–316; these read GMPNAGKS, FTTLV, DIPG, NKAD, and SAY. Residues S173 and T193 each coordinate Mg(2+). The interval 356–377 is disordered; that stretch reads QNANESVNEDYDDDLDDDDYDD. Residues 362–377 show a composition bias toward acidic residues; the sequence is VNEDYDDDLDDDDYDD.

Belongs to the TRAFAC class OBG-HflX-like GTPase superfamily. OBG GTPase family. In terms of assembly, monomer. Requires Mg(2+) as cofactor.

It localises to the cytoplasm. In terms of biological role, an essential GTPase which binds GTP, GDP and possibly (p)ppGpp with moderate affinity, with high nucleotide exchange rates and a fairly low GTP hydrolysis rate. Plays a role in control of the cell cycle, stress response, ribosome biogenesis and in those bacteria that undergo differentiation, in morphogenesis control. The sequence is that of GTPase Obg from Shewanella piezotolerans (strain WP3 / JCM 13877).